Consider the following 98-residue polypeptide: NADH-ubiquinone oxidoreductase chain 4L (98 aa).

3 consecutive transmembrane segments (helical) span residues 1-21 (MSLVYMNIMTAFMVSLAGLLM), 29-49 (SLLCLEGMMLSLFVMATLTIL), and 61-81 (IILLVFAACEAALGLSLLVMV).

This sequence belongs to the complex I subunit 4L family. As to quaternary structure, core subunit of respiratory chain NADH dehydrogenase (Complex I) which is composed of 45 different subunits.

It is found in the mitochondrion inner membrane. It catalyses the reaction a ubiquinone + NADH + 5 H(+)(in) = a ubiquinol + NAD(+) + 4 H(+)(out). Its function is as follows. Core subunit of the mitochondrial membrane respiratory chain NADH dehydrogenase (Complex I) which catalyzes electron transfer from NADH through the respiratory chain, using ubiquinone as an electron acceptor. Part of the enzyme membrane arm which is embedded in the lipid bilayer and involved in proton translocation. This chain is NADH-ubiquinone oxidoreductase chain 4L (MT-ND4L), found in Rangifer tarandus (Reindeer).